Consider the following 276-residue polypeptide: Phosphatidylcholine synthase (276 aa).

At Met1–Lys30 the chain is on the cytoplasmic side. A helical transmembrane segment spans residues Ala31–Ala51. Residues Ala52–Tyr57 are Periplasmic-facing. A helical membrane pass occupies residues Thr58–Ala78. The Cytoplasmic portion of the chain corresponds to Arg79–Ser91. The helical transmembrane segment at Gly92–Leu112 threads the bilayer. The Periplasmic portion of the chain corresponds to Tyr113–Ser115. The helical transmembrane segment at Gly116–Ile136 threads the bilayer. At Tyr137 to Lys146 the chain is on the cytoplasmic side. A helical transmembrane segment spans residues Glu147–Val167. The Periplasmic portion of the chain corresponds to Arg168–Glu171. Residues Trp172–Leu192 traverse the membrane as a helical segment. The Cytoplasmic segment spans residues His193–Pro202. A helical transmembrane segment spans residues Leu203 to Leu223. The Periplasmic segment spans residues Asp224–Arg230. Residues Ile231–Pro251 traverse the membrane as a helical segment. Topologically, residues Ser252–Pro276 are cytoplasmic.

It belongs to the CDP-alcohol phosphatidyltransferase class-I family. The cofactor is Mn(2+).

It localises to the cell inner membrane. It carries out the reaction a CDP-1,2-diacyl-sn-glycerol + choline = a 1,2-diacyl-sn-glycero-3-phosphocholine + CMP + H(+). In terms of biological role, condenses choline with CDP-diglyceride to produce phosphatidylcholine and CMP. The polypeptide is Phosphatidylcholine synthase (Brucella melitensis biotype 1 (strain ATCC 23456 / CCUG 17765 / NCTC 10094 / 16M)).